The chain runs to 156 residues: Small ribosomal subunit protein uS7 (156 aa).

Belongs to the universal ribosomal protein uS7 family. As to quaternary structure, part of the 30S ribosomal subunit. Contacts proteins S9 and S11.

Its function is as follows. One of the primary rRNA binding proteins, it binds directly to 16S rRNA where it nucleates assembly of the head domain of the 30S subunit. Is located at the subunit interface close to the decoding center, probably blocks exit of the E-site tRNA. In Blochmanniella pennsylvanica (strain BPEN), this protein is Small ribosomal subunit protein uS7.